The chain runs to 115 residues: ATP synthase subunit g, mitochondrial (115 aa).

Met-1 carries the post-translational modification N-acetylmethionine. 2 positions are modified to phosphoserine: Ser-3 and Ser-62.

This sequence belongs to the ATPase g subunit family. In terms of assembly, F-type ATPases have 2 components, CF(1) - the catalytic core - and CF(0) - the membrane proton channel. In yeast, the dimeric form of ATP synthase consists of 17 polypeptides: alpha, beta, gamma, delta, epsilon, 4 (B), 5 (OSCP), 6 (A), 8, 9 (C), d, E (Tim11), f, g, h, i/j and k. Phosphorylation on Ser-62 impairs ATP synthase dimerization.

It is found in the mitochondrion membrane. Functionally, mitochondrial membrane ATP synthase (F(1)F(0) ATP synthase or Complex V) produces ATP from ADP in the presence of a proton gradient across the membrane which is generated by electron transport complexes of the respiratory chain. F-type ATPases consist of two structural domains, F(1) - containing the extramembraneous catalytic core, and F(0) - containing the membrane proton channel, linked together by a central stalk and a peripheral stalk. During catalysis, ATP synthesis in the catalytic domain of F(1) is coupled via a rotary mechanism of the central stalk subunits to proton translocation. Part of the complex F(0) domain. Minor subunit located with subunit a in the membrane. This Saccharomyces cerevisiae (strain ATCC 204508 / S288c) (Baker's yeast) protein is ATP synthase subunit g, mitochondrial (ATP20).